The sequence spans 513 residues: MDEFHRYGKEDNSRQQCFLYPLFFQEDLYAISHDHYLDGSSSSEPMEHLSSNDQFSFLTVKRLIGQIRQQNHSIVLFVNCAPNPLADCKKSSYSESVLEGLTLVLEVPFSIRSKYSGMNEWKSFRSIHSIFPFLEDKFPHSNYISDARIPYSIHPEILVRTFRRLIRDAPSLHPLRSVLYEYRNSPENLQRSIIVVPRVNTRFFLFLWNYYVYECESILFSLLKRSSHSRSLSHRPFPQRTHFHRKIKHIIIFSRRNSLKSIWLLKDPKIHYVRYGERSIIAIKGTHLLVKKCRYYLLLFRQCYFHLWSEPYRVCSHQLSKNCSSSPGYFLRVRMNPLFVRTKMLDELFIADLITNEFDPIVPIVPILGLLAREKFCDVSGRPISKLSWTNLTDDDILNRFDQIWRNLFHYYSGSFGRDGLYRIKYILSLSCAKTLACKHKSTIRVVRKELGPELFQKSFSKEREFDSLPFSSKAAARSQRERIWHSDIPQINPLVNSWQKIQDLKIENLFDQ.

This sequence belongs to the intron maturase 2 family. MatK subfamily.

The protein resides in the plastid. It is found in the chloroplast. In terms of biological role, usually encoded in the trnK tRNA gene intron. Probably assists in splicing its own and other chloroplast group II introns. The protein is Maturase K of Pinus parviflora (Japanese white pine).